The sequence spans 278 residues: Thiazole synthase (278 aa).

Lysine 107 (schiff-base intermediate with DXP) is an active-site residue. 1-deoxy-D-xylulose 5-phosphate contacts are provided by residues glycine 168, alanine 194–glycine 195, and alanine 216–serine 217.

This sequence belongs to the ThiG family. In terms of assembly, homotetramer. Forms heterodimers with either ThiH or ThiS.

It is found in the cytoplasm. It catalyses the reaction [ThiS sulfur-carrier protein]-C-terminal-Gly-aminoethanethioate + 2-iminoacetate + 1-deoxy-D-xylulose 5-phosphate = [ThiS sulfur-carrier protein]-C-terminal Gly-Gly + 2-[(2R,5Z)-2-carboxy-4-methylthiazol-5(2H)-ylidene]ethyl phosphate + 2 H2O + H(+). It functions in the pathway cofactor biosynthesis; thiamine diphosphate biosynthesis. Catalyzes the rearrangement of 1-deoxy-D-xylulose 5-phosphate (DXP) to produce the thiazole phosphate moiety of thiamine. Sulfur is provided by the thiocarboxylate moiety of the carrier protein ThiS. In vitro, sulfur can be provided by H(2)S. This Corynebacterium jeikeium (strain K411) protein is Thiazole synthase.